Here is a 141-residue protein sequence, read N- to C-terminus: 3-hydroxyacyl-[acyl-carrier-protein] dehydratase FabZ (141 aa).

Residue H47 is part of the active site.

It belongs to the thioester dehydratase family. FabZ subfamily.

The protein localises to the cytoplasm. It carries out the reaction a (3R)-hydroxyacyl-[ACP] = a (2E)-enoyl-[ACP] + H2O. Its function is as follows. Involved in unsaturated fatty acids biosynthesis. Catalyzes the dehydration of short chain beta-hydroxyacyl-ACPs and long chain saturated and unsaturated beta-hydroxyacyl-ACPs. The sequence is that of 3-hydroxyacyl-[acyl-carrier-protein] dehydratase FabZ from Caldanaerobacter subterraneus subsp. tengcongensis (strain DSM 15242 / JCM 11007 / NBRC 100824 / MB4) (Thermoanaerobacter tengcongensis).